A 162-amino-acid polypeptide reads, in one-letter code: MTPLFRKAVWLLFAVSVCAFAGSLAAQYVLGMEPCVLCISQRLCVLATALCTAIVLMCRPRRRAGGLFGAVFISIPAVTGISVAAYQLWLQSLPPGTAPSCGAPWTFRLKGWSLFDWFEPVVRGFGNCAEPDYLLGVALPVWSAAYFLAVVLTVWWAWARAK.

At 1–8 (MTPLFRKA) the chain is on the cytoplasmic side. A helical transmembrane segment spans residues 9 to 25 (VWLLFAVSVCAFAGSLA). At 26 to 43 (AQYVLGMEPCVLCISQRL) the chain is on the periplasmic side. Cys35 and Cys38 are disulfide-bonded. Residues 44–60 (CVLATALCTAIVLMCRP) form a helical membrane-spanning segment. At 61-67 (RRRAGGL) the chain is on the cytoplasmic side. A helical membrane pass occupies residues 68 to 85 (FGAVFISIPAVTGISVAA). The Periplasmic portion of the chain corresponds to 86–141 (YQLWLQSLPPGTAPSCGAPWTFRLKGWSLFDWFEPVVRGFGNCAEPDYLLGVALPV). Cys101 and Cys128 are oxidised to a cystine. Residues 142-160 (WSAAYFLAVVLTVWWAWAR) traverse the membrane as a helical segment. Residues 161-162 (AK) lie on the Cytoplasmic side of the membrane.

This sequence belongs to the DsbB family.

It is found in the cell inner membrane. Functionally, required for disulfide bond formation in some periplasmic proteins. Acts by oxidizing the DsbA protein. The polypeptide is Disulfide bond formation protein B (Neisseria meningitidis serogroup C / serotype 2a (strain ATCC 700532 / DSM 15464 / FAM18)).